Here is a 504-residue protein sequence, read N- to C-terminus: D-alanine--D-alanyl carrier protein ligase (504 aa).

152-153 (TS) lines the ATP pocket. Asp-197 contributes to the D-alanine binding site. 292–297 (NTYGPT) serves as a coordination point for ATP. Val-301 serves as a coordination point for D-alanine. ATP is bound by residues Asp-383, 394–397 (YNGR), and Lys-492. D-alanine is bound at residue Lys-492.

The protein belongs to the ATP-dependent AMP-binding enzyme family. DltA subfamily.

It localises to the cytoplasm. The catalysed reaction is holo-[D-alanyl-carrier protein] + D-alanine + ATP = D-alanyl-[D-alanyl-carrier protein] + AMP + diphosphate. The protein operates within cell wall biogenesis; lipoteichoic acid biosynthesis. Catalyzes the first step in the D-alanylation of lipoteichoic acid (LTA), the activation of D-alanine and its transfer onto the D-alanyl carrier protein (Dcp) DltC. In an ATP-dependent two-step reaction, forms a high energy D-alanyl-AMP intermediate, followed by transfer of the D-alanyl residue as a thiol ester to the phosphopantheinyl prosthetic group of the Dcp. D-alanylation of LTA plays an important role in modulating the properties of the cell wall in Gram-positive bacteria, influencing the net charge of the cell wall. The sequence is that of D-alanine--D-alanyl carrier protein ligase from Bacillus cereus (strain G9842).